The following is a 113-amino-acid chain: Large ribosomal subunit protein uL24 (113 aa).

This sequence belongs to the universal ribosomal protein uL24 family. In terms of assembly, part of the 50S ribosomal subunit.

Functionally, one of two assembly initiator proteins, it binds directly to the 5'-end of the 23S rRNA, where it nucleates assembly of the 50S subunit. One of the proteins that surrounds the polypeptide exit tunnel on the outside of the subunit. This is Large ribosomal subunit protein uL24 from Synechococcus sp. (strain RCC307).